The primary structure comprises 336 residues: Aspartate--ammonia ligase (336 aa).

Belongs to the class-II aminoacyl-tRNA synthetase family. AsnA subfamily.

The protein resides in the cytoplasm. The catalysed reaction is L-aspartate + NH4(+) + ATP = L-asparagine + AMP + diphosphate + H(+). It functions in the pathway amino-acid biosynthesis; L-asparagine biosynthesis; L-asparagine from L-aspartate (ammonia route): step 1/1. This Ruminiclostridium cellulolyticum (strain ATCC 35319 / DSM 5812 / JCM 6584 / H10) (Clostridium cellulolyticum) protein is Aspartate--ammonia ligase.